The primary structure comprises 300 residues: Actin-related protein 2/3 complex subunit 2 (300 aa).

N6-acetyllysine is present on residues K275 and K295.

The protein belongs to the ARPC2 family. Component of the Arp2/3 complex composed of ACTR2/ARP2, ACTR3/ARP3, ARPC1B/p41-ARC, ARPC2/p34-ARC, ARPC3/p21-ARC, ARPC4/p20-ARC and ARPC5/p16-ARC. Interacts with SHANK3; the interaction probably mediates the association of SHANK3 with the Arp2/3 complex.

Its subcellular location is the cytoplasm. The protein resides in the cytoskeleton. It localises to the cell projection. It is found in the synapse. The protein localises to the synaptosome. Its subcellular location is the nucleus. Actin-binding component of the Arp2/3 complex, a multiprotein complex that mediates actin polymerization upon stimulation by nucleation-promoting factor (NPF). The Arp2/3 complex mediates the formation of branched actin networks in the cytoplasm, providing the force for cell motility. Seems to contact the mother actin filament. In addition to its role in the cytoplasmic cytoskeleton, the Arp2/3 complex also promotes actin polymerization in the nucleus, thereby regulating gene transcription and repair of damaged DNA. The Arp2/3 complex promotes homologous recombination (HR) repair in response to DNA damage by promoting nuclear actin polymerization, leading to drive motility of double-strand breaks (DSBs). This Rattus norvegicus (Rat) protein is Actin-related protein 2/3 complex subunit 2.